Reading from the N-terminus, the 545-residue chain is MSSPWKTSQSSVPMPEMIVKIVGSKHFRYFIEKPMNKQNEKLKTEPQTSLQKPRNDYSRRVSRDLPGPTDSSEQQITANPAEKEESKHQRSSLKPESNQKFLTRVFSNRFLDGRISYEANVHCSSVPTGDQSLSYMHSLPRRKSVGWCLEHTAKDSSGQAEEIVQRPSVMTREDSFLTTLVRRELNSRPLSSNLLDKLQKELKTLDPISSGFLHQSQLSCLFLRHKVPLPLLTVKLLCQRFSRRCSPEMVNYGEVLCFLKEATKDNLQQNGTAGYSNSRKTSSPSYHKQSIPPQDSSLLSEVNKSLLEILKMALRPCQGKLSIDCLNMSFRKEDHSFSGCLPLPKVISICSKHGLYVTMTLLETLLHHQELGYRGEIKWKNFVKWLNRASADLSCDMPAGKNKKETQGDLVDIPERPQRKTEHVKTPEENLQTKNPTTMTSAPEDPVTFFKNRPVSQPVEHLAVKKDGQSELWIDRFRKLENALYLCDLSNTGVLERERARRLIHNYNLIYSLSLSPRRINQALQRYRSGENIILEPALQYLKEL.

Composition is skewed to basic and acidic residues over residues 34 to 44 (PMNKQNEKLKT) and 53 to 63 (PRNDYSRRVSR). Disordered stretches follow at residues 34–98 (PMNK…PESN), 269–296 (QNGT…PQDS), and 415–444 (ERPQ…SAPE). The span at 69–78 (TDSSEQQITA) shows a compositional bias: polar residues. Positions 415–428 (ERPQRKTEHVKTPE) are enriched in basic and acidic residues. Residues 429-441 (ENLQTKNPTTMTS) show a composition bias toward polar residues.

This is an uncharacterized protein from Mus musculus (Mouse).